The following is a 408-amino-acid chain: Cell division protein FtsZ 2 (408 aa).

GTP is bound by residues Gly130–Gly132, Glu169, Arg173, and Asp216.

The protein belongs to the FtsZ family. As to quaternary structure, homodimer. Polymerizes to form a dynamic ring structure in a strictly GTP-dependent manner. Interacts directly with several other division proteins.

Its subcellular location is the cytoplasm. Functionally, essential cell division protein that forms a contractile ring structure (Z ring) at the future cell division site. The regulation of the ring assembly controls the timing and the location of cell division. One of the functions of the FtsZ ring is to recruit other cell division proteins to the septum to produce a new cell wall between the dividing cells. Binds GTP and shows GTPase activity. The protein is Cell division protein FtsZ 2 of Pyrococcus furiosus (strain ATCC 43587 / DSM 3638 / JCM 8422 / Vc1).